A 304-amino-acid chain; its full sequence is Methionyl-tRNA formyltransferase (304 aa).

106–109 (SLLP) is a (6S)-5,6,7,8-tetrahydrofolate binding site.

Belongs to the Fmt family.

It catalyses the reaction L-methionyl-tRNA(fMet) + (6R)-10-formyltetrahydrofolate = N-formyl-L-methionyl-tRNA(fMet) + (6S)-5,6,7,8-tetrahydrofolate + H(+). Attaches a formyl group to the free amino group of methionyl-tRNA(fMet). The formyl group appears to play a dual role in the initiator identity of N-formylmethionyl-tRNA by promoting its recognition by IF2 and preventing the misappropriation of this tRNA by the elongation apparatus. The protein is Methionyl-tRNA formyltransferase of Thermosipho africanus (strain TCF52B).